A 157-amino-acid chain; its full sequence is Probable chemoreceptor glutamine deamidase CheD (157 aa).

Belongs to the CheD family.

It carries out the reaction L-glutaminyl-[protein] + H2O = L-glutamyl-[protein] + NH4(+). Functionally, probably deamidates glutamine residues to glutamate on methyl-accepting chemotaxis receptors (MCPs), playing an important role in chemotaxis. This chain is Probable chemoreceptor glutamine deamidase CheD, found in Archaeoglobus fulgidus (strain ATCC 49558 / DSM 4304 / JCM 9628 / NBRC 100126 / VC-16).